We begin with the raw amino-acid sequence, 404 residues long: Cysteine desulfurase IscS (404 aa).

Pyridoxal 5'-phosphate-binding positions include 75 to 76 (AT), N155, Q183, and 203 to 205 (SAH). Residue K206 is modified to N6-(pyridoxal phosphate)lysine. T243 provides a ligand contact to pyridoxal 5'-phosphate. The Cysteine persulfide intermediate role is filled by C328. Residue C328 coordinates [2Fe-2S] cluster.

The protein belongs to the class-V pyridoxal-phosphate-dependent aminotransferase family. NifS/IscS subfamily. In terms of assembly, homodimer. Forms a heterotetramer with IscU, interacts with other sulfur acceptors. Requires pyridoxal 5'-phosphate as cofactor.

Its subcellular location is the cytoplasm. It carries out the reaction (sulfur carrier)-H + L-cysteine = (sulfur carrier)-SH + L-alanine. It participates in cofactor biosynthesis; iron-sulfur cluster biosynthesis. Functionally, master enzyme that delivers sulfur to a number of partners involved in Fe-S cluster assembly, tRNA modification or cofactor biosynthesis. Catalyzes the removal of elemental sulfur atoms from cysteine to produce alanine. Functions as a sulfur delivery protein for Fe-S cluster synthesis onto IscU, an Fe-S scaffold assembly protein, as well as other S acceptor proteins. This chain is Cysteine desulfurase IscS, found in Shewanella woodyi (strain ATCC 51908 / MS32).